The following is a 108-amino-acid chain: Insulin-1 (108 aa).

An N-terminal signal peptide occupies residues 1–24; it reads MALLVHFLPLLALLALWEPKPTQA. Disulfide bonds link Cys31–Cys94, Cys43–Cys107, and Cys93–Cys98. Residues 57–85 constitute a propeptide, c peptide; it reads EVEDPQVEQLELGGSPGDLQTLALEVARQ.

Belongs to the insulin family. Heterodimer of a B chain and an A chain linked by two disulfide bonds.

Its subcellular location is the secreted. In terms of biological role, insulin decreases blood glucose concentration. It increases cell permeability to monosaccharides, amino acids and fatty acids. It accelerates glycolysis, the pentose phosphate cycle, and glycogen synthesis in liver. The sequence is that of Insulin-1 (Ins1) from Mus musculus (Mouse).